Here is an 88-residue protein sequence, read N- to C-terminus: Small ribosomal subunit protein bS16 (88 aa).

This sequence belongs to the bacterial ribosomal protein bS16 family.

In Anaeromyxobacter sp. (strain Fw109-5), this protein is Small ribosomal subunit protein bS16.